Consider the following 73-residue polypeptide: Beta-defensin 40 (73 aa).

Positions 1 to 23 (MKISCFLLMIFFLSCFQINPVAV) are cleaved as a signal peptide. 3 disulfides stabilise this stretch: Cys29–Cys58, Cys36–Cys51, and Cys41–Cys59.

This sequence belongs to the beta-defensin family. Only expressed in epididymis (corpus, cauda and caput).

The protein resides in the secreted. In terms of biological role, has antibacterial activity. This is Beta-defensin 40 (Defb40) from Mus musculus (Mouse).